The sequence spans 689 residues: Glycine--tRNA ligase beta subunit (689 aa).

It belongs to the class-II aminoacyl-tRNA synthetase family. Tetramer of two alpha and two beta subunits.

It localises to the cytoplasm. It carries out the reaction tRNA(Gly) + glycine + ATP = glycyl-tRNA(Gly) + AMP + diphosphate. This is Glycine--tRNA ligase beta subunit from Photobacterium profundum (strain SS9).